Consider the following 380-residue polypeptide: Cytochrome b (380 aa).

4 helical membrane passes run 34–54 (FGSLLAVCLITQILTGLLLAM), 78–99 (WLIRNLHANGASFFFICIFLHI), 114–134 (WNTGVILLLTLMATAFVGYVL), and 179–199 (FFALHFLLPFVIAGITIIHLT). Positions 84 and 98 each coordinate heme b. The heme b site is built by H183 and H197. A ubiquinone is bound at residue H202. 4 helical membrane-spanning segments follow: residues 227–247 (IKDILGLALMFIPFLTLTLFS), 289–309 (LGGVLALAASVLILLLIPFLH), 321–341 (LSQTLFWLLVANLLILTWIGS), and 348–368 (FIIIGQMASLSYFSILLILFP).

Belongs to the cytochrome b family. The cytochrome bc1 complex contains 11 subunits: 3 respiratory subunits (MT-CYB, CYC1 and UQCRFS1), 2 core proteins (UQCRC1 and UQCRC2) and 6 low-molecular weight proteins (UQCRH/QCR6, UQCRB/QCR7, UQCRQ/QCR8, UQCR10/QCR9, UQCR11/QCR10 and a cleavage product of UQCRFS1). This cytochrome bc1 complex then forms a dimer. Requires heme b as cofactor.

Its subcellular location is the mitochondrion inner membrane. Component of the ubiquinol-cytochrome c reductase complex (complex III or cytochrome b-c1 complex) that is part of the mitochondrial respiratory chain. The b-c1 complex mediates electron transfer from ubiquinol to cytochrome c. Contributes to the generation of a proton gradient across the mitochondrial membrane that is then used for ATP synthesis. The polypeptide is Cytochrome b (MT-CYB) (Alectoris graeca (Rock partridge)).